The sequence spans 475 residues: Ribulose bisphosphate carboxylase large chain (475 aa).

Residues methionine 1 to serine 2 constitute a propeptide that is removed on maturation. Proline 3 carries the N-acetylproline modification. Lysine 14 is modified (N6,N6,N6-trimethyllysine). Positions 123 and 173 each coordinate substrate. Lysine 175 (proton acceptor) is an active-site residue. A substrate-binding site is contributed by lysine 177. Residues lysine 201, aspartate 203, and glutamate 204 each contribute to the Mg(2+) site. Lysine 201 bears the N6-carboxylysine mark. Histidine 294 acts as the Proton acceptor in catalysis. Substrate is bound by residues arginine 295, histidine 327, and serine 379.

This sequence belongs to the RuBisCO large chain family. Type I subfamily. As to quaternary structure, heterohexadecamer of 8 large chains and 8 small chains; disulfide-linked. The disulfide link is formed within the large subunit homodimers. Requires Mg(2+) as cofactor. The disulfide bond which can form in the large chain dimeric partners within the hexadecamer appears to be associated with oxidative stress and protein turnover.

It is found in the plastid. It localises to the chloroplast. It carries out the reaction 2 (2R)-3-phosphoglycerate + 2 H(+) = D-ribulose 1,5-bisphosphate + CO2 + H2O. It catalyses the reaction D-ribulose 1,5-bisphosphate + O2 = 2-phosphoglycolate + (2R)-3-phosphoglycerate + 2 H(+). Its function is as follows. RuBisCO catalyzes two reactions: the carboxylation of D-ribulose 1,5-bisphosphate, the primary event in carbon dioxide fixation, as well as the oxidative fragmentation of the pentose substrate in the photorespiration process. Both reactions occur simultaneously and in competition at the same active site. This chain is Ribulose bisphosphate carboxylase large chain, found in Lotus japonicus (Lotus corniculatus var. japonicus).